Reading from the N-terminus, the 332-residue chain is Transcription factor HBP-1b(c38) (332 aa).

The tract at residues 1 to 48 is disordered; it reads MAEASPRTETSTDDTDENLMLEPGNAALAVVSDSSDRSRDKNGDQKTM. Positions 34–47 are enriched in basic and acidic residues; it reads SSDRSRDKNGDQKT. The bZIP domain occupies 44 to 107; sequence DQKTMRRLAQ…SSADQSHSMS (64 aa). The tract at residues 46-66 is basic motif; sequence KTMRRLAQNREAARKSRLRKK. Residues 47–142 adopt a coiled-coil conformation; it reads TMRRLAQNRE…RAAVNAHAGD (96 aa). Positions 72-86 are leucine-zipper; the sequence is LENSRLKLTQLEQEL. The region spanning 111-329 is the DOG1 domain; that stretch reads ALAFDTEYAR…RALSSLWLAR (219 aa).

This sequence belongs to the bZIP family. As to quaternary structure, binds DNA as a dimer.

Its subcellular location is the nucleus. In terms of biological role, transcriptional activator that binds specifically to the DNA sequence 5'-TGACG-3'. Recognizes ocs elements like the as-1 motif of the cauliflower mosaic virus 35S promoter. Binding to the as-1-like cis elements mediate auxin- and salicylic acid-inducible transcription. Binds to the hexamer motif 5'-ACGTCA-3' of histone gene promoters. This is Transcription factor HBP-1b(c38) from Triticum aestivum (Wheat).